Consider the following 354-residue polypeptide: Period circadian protein (354 aa).

PAS domains follow at residues 1–55 (GIVM…VNGQ) and 133–235 (FVMR…HIIE). The segment at 318–354 (IQDPDHSYYQRDSVMLGGISPHHDYNDSKSSTGTPLS) is disordered. Residues 345-354 (SKSSTGTPLS) are compositionally biased toward polar residues.

Forms a heterodimer with timeless (TIM); the complex then translocates into the nucleus. In terms of processing, phosphorylated with a circadian rhythmicity.

Its subcellular location is the nucleus. Functionally, involved in the generation of biological rhythms. The biological cycle depends on the rhythmic formation and nuclear localization of the tim-per complex. Light induces the degradation of tim, which promotes elimination of per. Nuclear activity of the heterodimer coordinatively regulates per and tim transcription negative feedback loop. Behaves as a negative element in circadian transcriptional loop. Does not appear to bind DNA, suggesting indirect transcriptional inhibition. The protein is Period circadian protein (per) of Manduca sexta (Tobacco hawkmoth).